A 297-amino-acid chain; its full sequence is MEFDFDVHKIFLEPITKLDSSLIPSRRPLIASSEAQKQIMTVIDEIGKASAKAQRLPAPITSASRMQTNKHHLYILKDCTPKTAGRGAVIGFLKVGCKKLFVLDQKGSHIEAEPLCILDFYIHETLQRHGFGKELFTFMLKNEQVDVHHLAIDRPSEKFLSFLRKHFNLWSTIPQVNNFVVFDGFFRDWKASVKKTPAKRTEGEIKPYSLTDRDFLKQEEGLPWPFSQSQLNLNRASSLGSSPTRACSRHSPGEEDFVKSLRNCRPHSLHRTANSEQEDHSQRRRTSSLNRPQSIHH.

An N-acetyltransferase domain is found at 1–186; sequence MEFDFDVHKI…NNFVVFDGFF (186 aa). Acetyl-CoA-binding positions include 120–133 and 156–165; these read FYIH…GFGK and SEKFLSFLRK. The disordered stretch occupies residues 269–297; it reads LHRTANSEQEDHSQRRRTSSLNRPQSIHH. The segment covering 287 to 297 has biased composition (polar residues); it reads SSLNRPQSIHH.

Belongs to the acetyltransferase ATAT1 family.

The protein localises to the cytoplasm. It localises to the membrane. It is found in the clathrin-coated pit. The protein resides in the cell junction. Its subcellular location is the focal adhesion. The protein localises to the cell projection. It localises to the axon. It is found in the cytoskeleton. The protein resides in the spindle. The enzyme catalyses L-lysyl-[alpha-tubulin] + acetyl-CoA = N(6)-acetyl-L-lysyl-[alpha-tubulin] + CoA + H(+). Functionally, specifically acetylates 'Lys-40' in alpha-tubulin on the lumenal side of microtubules. Promotes microtubule destabilization and accelerates microtubule dynamics; this activity may be independent of acetylation activity. Acetylates alpha-tubulin with a slow enzymatic rate, due to a catalytic site that is not optimized for acetyl transfer. Enters the microtubule through each end and diffuses quickly throughout the lumen of microtubules. Acetylates only long/old microtubules because of its slow acetylation rate since it does not have time to act on dynamically unstable microtubules before the enzyme is released. May be involved in neuron development. In Xenopus tropicalis (Western clawed frog), this protein is Alpha-tubulin N-acetyltransferase 1.